A 442-amino-acid chain; its full sequence is Transcription factor AP-2-epsilon (442 aa).

The PPxY motif signature appears at tyrosine 54–tyrosine 59. The residue at position 246 (serine 246) is a Phosphoserine; by PKA. The H-S-H (helix-span-helix), dimerization stretch occupies residues arginine 287 to aspartate 417.

This sequence belongs to the AP-2 family. As to quaternary structure, binds DNA as a dimer. Can form homodimers or heterodimers with other AP-2 family members. In terms of tissue distribution, expressed in skin, primary keratinocytes, immortalized keratinocytes, and HeLa cell line.

Its subcellular location is the nucleus. Its function is as follows. Sequence-specific DNA-binding protein that interacts with inducible viral and cellular enhancer elements to regulate transcription of selected genes. AP-2 factors bind to the consensus sequence 5'-GCCNNNGGC-3' and activate genes involved in a large spectrum of important biological functions including proper eye, face, body wall, limb and neural tube development. They also suppress a number of genes including MCAM/MUC18, C/EBP alpha and MYC. AP-2-epsilon may play a role in the development of the CNS and in cartilage differentiation. This chain is Transcription factor AP-2-epsilon, found in Homo sapiens (Human).